The primary structure comprises 1971 residues: Germinal-center associated nuclear protein (1971 aa).

2 disordered regions span residues 1–50 (MHPV…KSLA) and 214–406 (PAFA…RGKS). Over residues 8 to 29 (GGQQPSAFAVSSSTTGTYQTKS) the composition is skewed to polar residues. Asymmetric dimethylarginine is present on Arg-32. An FG-repeats region spans residues 33–335 (FGQPSLFGQN…RPRGGTLFGR (303 aa)). Polar residues-rich tracts occupy residues 38 to 50 (LFGQ…KSLA) and 214 to 224 (PAFASPLSNQN). Residues 232 to 253 (STSAFGSSNSSFSTFPTASPGS) show a composition bias toward low complexity. 2 stretches are compositionally biased toward basic and acidic residues: residues 288 to 321 (RKED…DKRP) and 342 to 359 (KSNK…KESG). The segment at 414–550 (EEWIYSLGGV…AAGSLLSKSS (137 aa)) is DNA primase. Position 424 is a phosphoserine (Ser-424). N6-acetyllysine occurs at positions 483 and 484. A phosphoserine mark is found at Ser-502, Ser-531, and Ser-550. Residues 768–951 (NNENMTKCLQ…RKSVFIGRKL (184 aa)) form the PCI domain. Residues 1124-1162 (HVAAEEVSMERQRLEEEKQRAEEERLKQERELMLTQLSE) are a coiled coil. The segment at 1793 to 1840 (RELQLSHGRSGMRSIHPPTSTFPTPLLHVHQKGKKKEESGREGSLSTE) is disordered.

The protein belongs to the SAC3 family. In terms of assembly, component of the nuclear pore complex (NPC)-associated TREX-2 complex (transcription and export complex 2), composed of at least GANP, 2 copies of ENY2, PCID2, SEM1/DSS1, and either centrin CETN2 or centrin CETN3. The TREX-2 complex also associates with ALYREF/ALY. Interacts with RNA polymerase II subunit POLR2A and with the transcription elongation factor SUPT5H/SPT5. Interacts (via FG-repeats) with NXF1; this interaction is not mediated by RNA. Interacts with nuclear envelope proteins NUP62, NUP153 and RANBP2/NUP358; interaction with NUP153 is required for full localization at the nuclear pore complex. Interacts with several RNA helicases, including DHX9, DDX21, and DDX39A/DDX39, and with DNA topoisomerase TOP2A. Directly interacts with AICDA/AID. Interacts with the glucocorticoid receptor NR3C1. Interacts with MCM3. In terms of processing, phosphorylation at Ser-502 is induced in B-cells by CD40-stimulation, but not by bacterial lipopolysaccharide (LPS). As to expression, expressed at low levels in lymphoid organs, including thymus, spleen and lymph nodes. Up-regulated in stimulated B-cells in spleen and Peyer's patch germinal centers (at protein level).

It localises to the cytoplasm. Its subcellular location is the nucleus. The protein resides in the nucleus envelope. It is found in the nuclear pore complex. The protein localises to the nucleoplasm. It localises to the chromosome. The enzyme catalyses L-lysyl-[histone] + acetyl-CoA = N(6)-acetyl-L-lysyl-[histone] + CoA + H(+). Its function is as follows. As a component of the TREX-2 complex, involved in the export of mRNAs to the cytoplasm through the nuclear pores. Through the acetylation of histones, affects the assembly of nucleosomes at immunoglobulin variable region genes and promotes the recruitment and positioning of transcription complex to favor DNA cytosine deaminase AICDA/AID targeting, hence promoting somatic hypermutations. The sequence is that of Germinal-center associated nuclear protein (Mcm3ap) from Mus musculus (Mouse).